A 492-amino-acid chain; its full sequence is Probable endopolygalacturonase D (492 aa).

Residues 1–16 form the signal peptide; the sequence is MKRSALILSFLPLVFG. Cys-151 and Cys-166 are oxidised to a cystine. PbH1 repeat units lie at residues 216-238, 258-280, 281-319, and 320-341; these read GTSV…AYWD, MYNS…EIES, TEHL…DIKE, and SSYF…AVTS. Asn-292 carries an N-linked (GlcNAc...) asparagine glycan. Asp-334 serves as the catalytic Proton donor. A disulfide bridge connects residues Cys-336 and Cys-352. His-356 is an active-site residue. 3 PbH1 repeats span residues 371–392, 400–422, and 434–478; these read VNGV…RIKT, VYNI…DVQQ, and TNGV…SITG. N-linked (GlcNAc...) asparagine glycosylation is found at Asn-407 and Asn-441. 2 disulfides stabilise this stretch: Cys-461-Cys-466 and Cys-484-Cys-491.

Belongs to the glycosyl hydrolase 28 family.

The protein resides in the secreted. It catalyses the reaction (1,4-alpha-D-galacturonosyl)n+m + H2O = (1,4-alpha-D-galacturonosyl)n + (1,4-alpha-D-galacturonosyl)m.. Its function is as follows. Involved in maceration and soft-rotting of plant tissue. Hydrolyzes the 1,4-alpha glycosidic bonds of de-esterified pectate in the smooth region of the plant cell wall. The chain is Probable endopolygalacturonase D (pgaD) from Aspergillus flavus (strain ATCC 200026 / FGSC A1120 / IAM 13836 / NRRL 3357 / JCM 12722 / SRRC 167).